The primary structure comprises 570 residues: Probable metalloreductase AIM14 (570 aa).

Transmembrane regions (helical) follow at residues 21–41, 70–90, 101–118, 142–162, 177–197, 204–224, and 230–250; these read IKYG…LALL, AIHL…HYSL, LGRL…LTLR, IITV…AIDD, FVGF…IGPM, LFYI…PIHS, and FPFL…RIVF. Residues 101-219 enclose the Ferric oxidoreductase domain; the sequence is LGRLSYALIP…NLVNVAFILL (119 aa). The 139-residue stretch at 250–388 folds into the FAD-binding FR-type domain; the sequence is FAKSLMILNK…GGSGISFALP (139 aa). The segment covering 481–505 has biased composition (polar residues); the sequence is SNFNSENADSNDNTPETSHSPTKEN. Residues 481–507 are disordered; sequence SNFNSENADSNDNTPETSHSPTKENGS.

It belongs to the ferric reductase (FRE) family. AIM14 subfamily. In terms of assembly, interacts with ribosomes.

It localises to the membrane. In terms of biological role, probable cell surface metalloreductase. May be involved in iron or copper homeostasis. The chain is Probable metalloreductase AIM14 (AIM14) from Saccharomyces cerevisiae (strain RM11-1a) (Baker's yeast).